A 619-amino-acid polypeptide reads, in one-letter code: MTESKAYRFGAVLLLIHLIFLVPGTEAASFQRNQLLQKEPDLRLENVQKFPSPEMIRALEYIEKLRQQAHREESSPDYNPYQGISVPLQLKENGEESHLAESSRDVLSEDEWMRIILEALRQAENEPPSALKENKPYALNLEKNFPVDTPDDYETQQWPERKLKHMRFPLMYEENSRENPFKRTNEIVEEQYTPQSLATLESVFQELGKLTGPSNQKRERVDEEQKLYTDDEDDVYKTNNIAYEDVVGGEDWSPMEEKIETQTQEEVRDSKENTEKNEQINEEMKRSGHLGLPDEGNRKESKDQLSEDASKVITYLRRLVNAVGSGRSQSGQNGDRAARLLERPLDSQSIYQLIEISRNLQIPPEDLIEMLKAGEKPNGLVEPEQDLELAVDLDDIPEADIDRPDMFQSKTLSKGGYPKAPGRGMMEALPDGLSVEDILNVLGMENVANQKSPYFPNQYSRDKALLRLPYGPGKSRANQIPKVAWIPDVESRQAPYDNLNDKDQELGEYLARMLVKYPELMNTNQLKRVPSPGSSEDDLQEEEQLEQAIKEHLGQGSSQEMEKLAKVSKRIPAGSLKNEDTPNRQYLDEDMLLKVLEYLNQEQAEQGREHLAKRAMENM.

The N-terminal stretch at 1 to 30 (MTESKAYRFGAVLLLIHLIFLVPGTEAASF) is a signal peptide. Sulfotyrosine is present on Tyr153. Phosphoserine occurs at positions 176 and 270. The interval 247–307 (VGGEDWSPME…RKESKDQLSE (61 aa)) is disordered. Basic and acidic residues-rich tracts occupy residues 255 to 286 (MEEK…EMKR) and 295 to 307 (EGNR…QLSE). Residues Ser434, Ser534, Ser557, and Ser558 each carry the phosphoserine modification.

It belongs to the chromogranin/secretogranin protein family. As to quaternary structure, interacts with Secretogranin III/SCG3. In terms of tissue distribution, brain. Expression in the pituitary is restricted to the anterior lobe. Expression in the hypothalamus is observed in the neuronal cells and neurons of arcuate nucleus, supraoptic nucleus and median eminence (at protein level).

The protein localises to the secreted. In terms of biological role, neuroendocrine protein of the granin family that regulates the biogenesis of secretory granules. In Rattus norvegicus (Rat), this protein is Secretogranin-2 (Scg2).